Here is a 91-residue protein sequence, read N- to C-terminus: Hepcidin-2 (91 aa).

The signal sequence occupies residues 1 to 24 (MKLSNVFLAAVVILTCVCVFQITA). Positions 25–64 (VPFIQQVQDEHHVESEELQENQHLTEAEHRLTDPLVLFRT) are excised as a propeptide. Cystine bridges form between Cys-73–Cys-89, Cys-76–Cys-79, Cys-77–Cys-85, and Cys-80–Cys-88.

This sequence belongs to the hepcidin family.

It localises to the secreted. Functionally, seems to act as a signaling molecule involved in the maintenance of iron homeostasis. Seems to be required in conjunction with HFE to regulate both intestinal iron absorption and iron storage in macrophages. May also have antimicrobial activity. This chain is Hepcidin-2 (hamp2), found in Danio rerio (Zebrafish).